A 292-amino-acid polypeptide reads, in one-letter code: Ribosomal protein L11 methyltransferase (292 aa).

Residues T136, G159, D181, and N228 each contribute to the S-adenosyl-L-methionine site.

The protein belongs to the methyltransferase superfamily. PrmA family.

The protein localises to the cytoplasm. The enzyme catalyses L-lysyl-[protein] + 3 S-adenosyl-L-methionine = N(6),N(6),N(6)-trimethyl-L-lysyl-[protein] + 3 S-adenosyl-L-homocysteine + 3 H(+). In terms of biological role, methylates ribosomal protein L11. This chain is Ribosomal protein L11 methyltransferase, found in Rhizobium leguminosarum bv. trifolii (strain WSM2304).